The primary structure comprises 285 residues: ATP phosphoribosyltransferase (285 aa).

It belongs to the ATP phosphoribosyltransferase family. Long subfamily. Mg(2+) is required as a cofactor.

The protein localises to the cytoplasm. It catalyses the reaction 1-(5-phospho-beta-D-ribosyl)-ATP + diphosphate = 5-phospho-alpha-D-ribose 1-diphosphate + ATP. It participates in amino-acid biosynthesis; L-histidine biosynthesis; L-histidine from 5-phospho-alpha-D-ribose 1-diphosphate: step 1/9. With respect to regulation, feedback inhibited by histidine. Catalyzes the condensation of ATP and 5-phosphoribose 1-diphosphate to form N'-(5'-phosphoribosyl)-ATP (PR-ATP). Has a crucial role in the pathway because the rate of histidine biosynthesis seems to be controlled primarily by regulation of HisG enzymatic activity. The sequence is that of ATP phosphoribosyltransferase from Sulfurisphaera tokodaii (strain DSM 16993 / JCM 10545 / NBRC 100140 / 7) (Sulfolobus tokodaii).